The sequence spans 887 residues: 3-hydroxy-3-methylglutaryl-coenzyme A reductase (887 aa).

Residues 1–9 (MLSRLFRMH) are Cytoplasmic-facing. Residues 10–39 (GLFVASHPWEVIVGTVTLTICMMSMNMFTG) traverse the membrane as a helical segment. The Lumenal portion of the chain corresponds to 40–56 (NNKICGWNYECPKFEED). The helical transmembrane segment at 57–78 (VLSSDIIILTITRCIAILYIYF) threads the bilayer. The region spanning 61-218 (DIIILTITRC…MTFFPACVSL (158 aa)) is the SSD domain. The INSIG-binding motif motif lies at 75–78 (YIYF). Residues 79–89 (QFQNLRQLGSK) lie on the Cytoplasmic side of the membrane. A Glycyl lysine isopeptide (Lys-Gly) (interchain with G-Cter in ubiquitin) cross-link involves residue Lys89. A helical transmembrane segment spans residues 90–114 (YILGIAGLFTIFSSFVFSTVVIHFL). At 115-123 (DKELTGLNE) the chain is on the lumenal side. Residues 124-149 (ALPFFLLLIDLSRASALAKFALSSNS) form a helical membrane-spanning segment. Residues 150–159 (QDEVRENIAR) are Cytoplasmic-facing. Residues 160–187 (GMAILGPTFTLDALVECLVIGVGTMSGV) traverse the membrane as a helical segment. Topologically, residues 188–191 (RQLE) are lumenal. The helical transmembrane segment at 192–220 (IMCCFGCMSVLANYFVFMTFFPACVSLVL) threads the bilayer. At 221–248 (ELSRESREGRPIWQLSHFARVLEEEENK) the chain is on the cytoplasmic side. Lys248 participates in a covalent cross-link: Glycyl lysine isopeptide (Lys-Gly) (interchain with G-Cter in ubiquitin). A helical membrane pass occupies residues 249–275 (PNPVTQRVKMIMSLGLVLVHAHSRWIA). Topologically, residues 276–314 (DPSPQNSTTEHSKVSLGLDEDVSKRIEPSVSLWQFYLSK) are lumenal. Asn281 is a glycosylation site (N-linked (GlcNAc...) asparagine). Residues 315 to 339 (MISMDIEQVVTLSLAFLLAVKYIFF) traverse the membrane as a helical segment. Over 340 to 887 (EQAETESTLS…LQGTCTKKAA (548 aa)) the chain is Cytoplasmic. Catalysis depends on charge relay system residues Glu558, Lys690, and Asp766. His865 functions as the Proton donor in the catalytic mechanism. Phosphoserine; by AMPK is present on Ser871.

Belongs to the HMG-CoA reductase family. As to quaternary structure, homotetramer. Homodimer. Interacts (via its SSD) with INSIG1; the interaction, accelerated by sterols, leads to the recruitment of HMGCR to AMFR/gp78 for its ubiquitination by the sterol-mediated ERAD pathway. Interacts with UBIAD1. In terms of processing, undergoes sterol-mediated ubiquitination and ER-associated degradation (ERAD). Accumulation of sterols in the endoplasmic reticulum (ER) membrane, triggers binding of the reductase to the ER membrane protein INSIG1 or INSIG2. The INSIG1 binding leads to the recruitment of the ubiquitin ligase, AMFR/gp78, RNF139 or RNF145, initiating ubiquitination of the reductase. The ubiquitinated reductase is then extracted from the ER membrane and delivered to cytosolic 26S proteosomes by a mechanism probably mediated by the ATPase Valosin-containing protein VCP/p97. The INSIG2-binding leads to the recruitment of the ubiquitin ligase RNF139, initiating ubiquitination of the reductase. Lys-248 is the main site of ubiquitination. Ubiquitination is enhanced by the presence of a geranylgeranylated protein. N-glycosylated. Deglycosylated by NGLY1 on release from the endoplasmic reticulum (ER) in a sterol-mediated manner. Post-translationally, phosphorylated. Phosphorylation at Ser-871 reduces the catalytic activity.

It localises to the endoplasmic reticulum membrane. The protein localises to the peroxisome membrane. The catalysed reaction is (R)-mevalonate + 2 NADP(+) + CoA = (3S)-3-hydroxy-3-methylglutaryl-CoA + 2 NADPH + 2 H(+). It functions in the pathway metabolic intermediate biosynthesis; (R)-mevalonate biosynthesis; (R)-mevalonate from acetyl-CoA: step 3/3. With respect to regulation, regulated by a negative feedback mechanism through sterols and non-sterol metabolites derived from mevalonate. Phosphorylation at Ser-871 down-regulates the catalytic activity. Functionally, catalyzes the conversion of (3S)-hydroxy-3-methylglutaryl-CoA (HMG-CoA) to mevalonic acid, the rate-limiting step in the synthesis of cholesterol and other isoprenoids, thus plays a critical role in cellular cholesterol homeostasis. The polypeptide is 3-hydroxy-3-methylglutaryl-coenzyme A reductase (HMGCR) (Mesocricetus auratus (Golden hamster)).